The chain runs to 207 residues: Imidazoleglycerol-phosphate dehydratase (207 aa).

Belongs to the imidazoleglycerol-phosphate dehydratase family.

The protein localises to the cytoplasm. The enzyme catalyses D-erythro-1-(imidazol-4-yl)glycerol 3-phosphate = 3-(imidazol-4-yl)-2-oxopropyl phosphate + H2O. The protein operates within amino-acid biosynthesis; L-histidine biosynthesis; L-histidine from 5-phospho-alpha-D-ribose 1-diphosphate: step 6/9. In Mycobacterium avium (strain 104), this protein is Imidazoleglycerol-phosphate dehydratase.